Reading from the N-terminus, the 495-residue chain is ATP-NADH kinase YEF1 (495 aa).

Residues 442–480 (KYRLDSSKNGNDTISNPLESSCISSDAQDEERKSVTETE) are disordered. The span at 448–467 (SKNGNDTISNPLESSCISSD) shows a compositional bias: polar residues.

The protein belongs to the NAD kinase family. As to quaternary structure, homooctamer. Mg(2+) serves as cofactor. Requires Mn(2+) as cofactor. It depends on Co(2+) as a cofactor. Ca(2+) is required as a cofactor.

The enzyme catalyses NADH + ATP = ADP + NADPH + H(+). In terms of biological role, ATP-NADH kinase with a low phosphorylation activity of both NADH and NAD(+) to produce NADP and NADPH by using ATP. UTR1 is responsible for essentially all of the NAD/NADH kinase activity resident in the cytoplasm, whereas POS5 is responsible for all mitochondrial NAD/NADH kinase activity and consequent mitochondrial genome maintenance. YEF1 can substitute for UTR1 when overexpressed. In Saccharomyces cerevisiae (strain ATCC 204508 / S288c) (Baker's yeast), this protein is ATP-NADH kinase YEF1 (YEF1).